The sequence spans 285 residues: MLFVLILSHRAASYGAIMAALPYMQLYIADYLADTMHLSAEEHGAYLLLMFNYWQTGKPIPKNRLAKIARLTNERWADVEPSLQEFFCDNGEEWVHLRIEEDLASVREKLTKKSAAGKASVQARRSRKEADVQTKQERNLTGVQTDVEVVFEHDVNTKATNKDTDKDLKTDPPLNPPRGNRGVKKFDPLDITLPNWISVSLWREWVEFRQALRKPIRTEQGANGAIRELEKFRQQGFSPEQVIRHSIANEYQGLFAPKGVRPETLLRQVNTVSLPDSAIPPGFRG.

2 disordered regions span residues Ala-115 to Asn-139 and Glu-152 to Val-183. Basic and acidic residues-rich tracts occupy residues Lys-128–Arg-138 and Glu-152–Thr-170.

This is an uncharacterized protein from Escherichia coli (strain K12).